The chain runs to 203 residues: Glycerol-3-phosphate acyltransferase (203 aa).

Helical transmembrane passes span 12–32 (ATLL…GLIL), 66–86 (TLLL…LWGV), 88–108 (AGIA…WLSF), 118–138 (IGVL…IWLA), and 159–179 (IALY…MTVI).

Belongs to the PlsY family. As to quaternary structure, probably interacts with PlsX.

It is found in the cell inner membrane. The catalysed reaction is an acyl phosphate + sn-glycerol 3-phosphate = a 1-acyl-sn-glycero-3-phosphate + phosphate. The protein operates within lipid metabolism; phospholipid metabolism. In terms of biological role, catalyzes the transfer of an acyl group from acyl-phosphate (acyl-PO(4)) to glycerol-3-phosphate (G3P) to form lysophosphatidic acid (LPA). This enzyme utilizes acyl-phosphate as fatty acyl donor, but not acyl-CoA or acyl-ACP. In Sinorhizobium fredii (strain NBRC 101917 / NGR234), this protein is Glycerol-3-phosphate acyltransferase.